The chain runs to 420 residues: Gamma-glutamyl phosphate reductase 2 (420 aa).

The protein belongs to the gamma-glutamyl phosphate reductase family.

The protein localises to the cytoplasm. The enzyme catalyses L-glutamate 5-semialdehyde + phosphate + NADP(+) = L-glutamyl 5-phosphate + NADPH + H(+). Its pathway is amino-acid biosynthesis; L-proline biosynthesis; L-glutamate 5-semialdehyde from L-glutamate: step 2/2. In terms of biological role, catalyzes the NADPH-dependent reduction of L-glutamate 5-phosphate into L-glutamate 5-semialdehyde and phosphate. The product spontaneously undergoes cyclization to form 1-pyrroline-5-carboxylate. The polypeptide is Gamma-glutamyl phosphate reductase 2 (Synechocystis sp. (strain ATCC 27184 / PCC 6803 / Kazusa)).